The primary structure comprises 119 residues: Phosphoribosyl-AMP cyclohydrolase (119 aa).

Residue Asp-77 coordinates Mg(2+). Cys-78 lines the Zn(2+) pocket. Residues Asp-79 and Asp-81 each contribute to the Mg(2+) site. The Zn(2+) site is built by Cys-94 and Cys-101.

The protein belongs to the PRA-CH family. Homodimer. It depends on Mg(2+) as a cofactor. The cofactor is Zn(2+).

The protein resides in the cytoplasm. The catalysed reaction is 1-(5-phospho-beta-D-ribosyl)-5'-AMP + H2O = 1-(5-phospho-beta-D-ribosyl)-5-[(5-phospho-beta-D-ribosylamino)methylideneamino]imidazole-4-carboxamide. It functions in the pathway amino-acid biosynthesis; L-histidine biosynthesis; L-histidine from 5-phospho-alpha-D-ribose 1-diphosphate: step 3/9. In terms of biological role, catalyzes the hydrolysis of the adenine ring of phosphoribosyl-AMP. This is Phosphoribosyl-AMP cyclohydrolase from Cereibacter sphaeroides (strain ATCC 17023 / DSM 158 / JCM 6121 / CCUG 31486 / LMG 2827 / NBRC 12203 / NCIMB 8253 / ATH 2.4.1.) (Rhodobacter sphaeroides).